Here is a 377-residue protein sequence, read N- to C-terminus: 5-hydroxytryptamine receptor 1D (377 aa).

N-linked (GlcNAc...) asparagine glycans are attached at residues Asn-5, Asn-17, and Asn-21. 3 helical membrane passes run 39-64 (ISLAVVLSIITVATVLSNTFVLTTIL), 76-97 (LIGSLATTDLLVSILVMPISIA), and 110-134 (LCDIWVSSDITCCTASILHLCVIAL). Cysteines 111 and 188 form a disulfide. Asp-118 and Cys-122 together coordinate serotonin. The short motif at 135 to 137 (DRY) is the DRY motif; important for ligand-induced conformation changes element. Helical transmembrane passes span 155-176 (AAAMIAVVWAISICISIPPLFW), 195-218 (ISYTIYSTCGAFYIPSVLLIVLYG), 301-326 (KTLGIILGAFIGCWLPFFVASLVLPI), and 336-359 (GLFDFFTWLGYLNSLINPIIYTVF). Ser-321 is a binding site for serotonin. An NPxxY motif; important for ligand-induced conformation changes and signaling motif is present at residues 352–356 (NPIIY).

This sequence belongs to the G-protein coupled receptor 1 family. As to quaternary structure, homodimer. Heterodimer with HTR1B.

The protein resides in the cell membrane. Its function is as follows. G-protein coupled receptor for 5-hydroxytryptamine (serotonin). Also functions as a receptor for ergot alkaloid derivatives, various anxiolytic and antidepressant drugs and other psychoactive substances. Ligand binding causes a conformation change that triggers signaling via guanine nucleotide-binding proteins (G proteins) and modulates the activity of downstream effectors, such as adenylate cyclase. HTR1D is coupled to G(i)/G(o) G alpha proteins and mediates inhibitory neurotransmission by inhibiting adenylate cyclase activity. Regulates the release of 5-hydroxytryptamine in the brain, and thereby affects neural activity. May also play a role in regulating the release of other neurotransmitters. May play a role in vasoconstriction. The sequence is that of 5-hydroxytryptamine receptor 1D (HTR1D) from Oryctolagus cuniculus (Rabbit).